The following is a 178-amino-acid chain: Large ribosomal subunit protein bL17 (178 aa).

It belongs to the bacterial ribosomal protein bL17 family. As to quaternary structure, part of the 50S ribosomal subunit. Contacts protein L32.

This chain is Large ribosomal subunit protein bL17, found in Lachnospira eligens (strain ATCC 27750 / DSM 3376 / VPI C15-48 / C15-B4) (Eubacterium eligens).